The following is a 285-amino-acid chain: Cyclin-Y-like protein 1B (285 aa).

The Cyclin N-terminal domain occupies 111-209; the sequence is PKRNCIFRHF…CFLELLEFNI (99 aa).

It belongs to the cyclin family. Cyclin Y subfamily.

In Homo sapiens (Human), this protein is Cyclin-Y-like protein 1B.